The following is a 159-amino-acid chain: Serine-protein kinase RsbW (159 aa).

The protein belongs to the anti-sigma-factor family.

The enzyme catalyses L-seryl-[protein] + ATP = O-phospho-L-seryl-[protein] + ADP + H(+). It carries out the reaction L-threonyl-[protein] + ATP = O-phospho-L-threonyl-[protein] + ADP + H(+). Its function is as follows. Negative regulator of sigma-B activity. Phosphorylates and inactivates its specific antagonist protein, RsbV. Upon phosphorylation of RsbV, RsbW is released and binds to sigma-B, thereby blocking its ability to form an RNA polymerase holoenzyme (E-sigma-B). The polypeptide is Serine-protein kinase RsbW (Staphylococcus aureus (strain MRSA252)).